We begin with the raw amino-acid sequence, 433 residues long: 3-phosphoshikimate 1-carboxyvinyltransferase (433 aa).

Residues lysine 22, serine 23, and arginine 27 each coordinate 3-phosphoshikimate. Lysine 22 contributes to the phosphoenolpyruvate binding site. Phosphoenolpyruvate-binding residues include glycine 95 and arginine 123. 3-phosphoshikimate is bound by residues serine 167, glutamine 169, aspartate 315, and lysine 342. Glutamine 169 contributes to the phosphoenolpyruvate binding site. The active-site Proton acceptor is the aspartate 315. Residues arginine 346 and arginine 387 each contribute to the phosphoenolpyruvate site.

This sequence belongs to the EPSP synthase family. In terms of assembly, monomer.

The protein resides in the cytoplasm. The catalysed reaction is 3-phosphoshikimate + phosphoenolpyruvate = 5-O-(1-carboxyvinyl)-3-phosphoshikimate + phosphate. Its pathway is metabolic intermediate biosynthesis; chorismate biosynthesis; chorismate from D-erythrose 4-phosphate and phosphoenolpyruvate: step 6/7. In terms of biological role, catalyzes the transfer of the enolpyruvyl moiety of phosphoenolpyruvate (PEP) to the 5-hydroxyl of shikimate-3-phosphate (S3P) to produce enolpyruvyl shikimate-3-phosphate and inorganic phosphate. In Legionella pneumophila subsp. pneumophila (strain Philadelphia 1 / ATCC 33152 / DSM 7513), this protein is 3-phosphoshikimate 1-carboxyvinyltransferase.